The sequence spans 431 residues: Glutamyl-tRNA(Gln) amidotransferase subunit A (431 aa).

Residues K55 and S130 each act as charge relay system in the active site. The active-site Acyl-ester intermediate is S154.

The protein belongs to the amidase family. GatA subfamily. In terms of assembly, heterotrimer of A, B and C subunits.

The catalysed reaction is L-glutamyl-tRNA(Gln) + L-glutamine + ATP + H2O = L-glutaminyl-tRNA(Gln) + L-glutamate + ADP + phosphate + H(+). In terms of biological role, allows the formation of correctly charged Gln-tRNA(Gln) through the transamidation of misacylated Glu-tRNA(Gln) in organisms which lack glutaminyl-tRNA synthetase. The reaction takes place in the presence of glutamine and ATP through an activated gamma-phospho-Glu-tRNA(Gln). The chain is Glutamyl-tRNA(Gln) amidotransferase subunit A from Methanococcus maripaludis (strain C5 / ATCC BAA-1333).